The chain runs to 20 residues: Non-specific lipid-transfer protein (20 aa).

The protein belongs to the plant LTP family.

Its function is as follows. Plant non-specific lipid-transfer proteins transfer phospholipids as well as galactolipids across membranes. May play a role in wax or cutin deposition in the cell walls of expanding epidermal cells and certain secretory tissues. In Citrus sinensis (Sweet orange), this protein is Non-specific lipid-transfer protein.